The sequence spans 276 residues: MTENRIPLAGVIGCPIAHSKSPQLHRHWLKTYGVDGHYMPMHVEPEDLESVVRMMPRMGFVGANVTIPHKQSIMEIADKVTDRAKLMGAANTLIFHEDGAIVADNTDGYGFITNLHEGAPDWDAKSGPATVFGAGGASRAVIASLIEAGVPEIRLTNRTRSRAKEVAQTFGSKVTAVDWVEAGNVIEDASLVVNTTSLGMTGQRRLRVPLDGLHSGIVVTDLVYNPLKTELLQAAEEAGCTVVDGLGMLLHQAVPGFERWFGQRPEVNSAARDAIL.

Shikimate contacts are provided by residues S19–S21 and T66. K70 serves as the catalytic Proton acceptor. Residue D82 coordinates NADP(+). Residues N91 and D107 each coordinate shikimate. NADP(+) is bound by residues G133–A137, N157–R162, and L222. A shikimate-binding site is contributed by Y224. Position 245 (G245) interacts with NADP(+).

Belongs to the shikimate dehydrogenase family. Homodimer.

It catalyses the reaction shikimate + NADP(+) = 3-dehydroshikimate + NADPH + H(+). The protein operates within metabolic intermediate biosynthesis; chorismate biosynthesis; chorismate from D-erythrose 4-phosphate and phosphoenolpyruvate: step 4/7. In terms of biological role, involved in the biosynthesis of the chorismate, which leads to the biosynthesis of aromatic amino acids. Catalyzes the reversible NADPH linked reduction of 3-dehydroshikimate (DHSA) to yield shikimate (SA). This is Shikimate dehydrogenase (NADP(+)) from Ruegeria sp. (strain TM1040) (Silicibacter sp.).